Consider the following 108-residue polypeptide: Glutaredoxin (108 aa).

One can recognise a Glutaredoxin domain in the interval leucine 3–alanine 103. A disulfide bridge connects residues cysteine 23 and cysteine 26.

The protein belongs to the glutaredoxin family. CPYC subfamily.

It is found in the cytoplasm. In terms of biological role, has a glutathione-disulfide oxidoreductase activity in the presence of NADPH and glutathione reductase. Reduces low molecular weight disulfides and proteins. This chain is Glutaredoxin, found in Solanum lycopersicum (Tomato).